Consider the following 175-residue polypeptide: 3-hydroxydecanoyl-[acyl-carrier-protein] dehydratase (175 aa).

His71 is an active-site residue.

It belongs to the thioester dehydratase family. FabA subfamily. As to quaternary structure, homodimer.

It localises to the cytoplasm. The catalysed reaction is a (3R)-hydroxyacyl-[ACP] = a (2E)-enoyl-[ACP] + H2O. It carries out the reaction (3R)-hydroxydecanoyl-[ACP] = (2E)-decenoyl-[ACP] + H2O. It catalyses the reaction (2E)-decenoyl-[ACP] = (3Z)-decenoyl-[ACP]. The protein operates within lipid metabolism; fatty acid biosynthesis. Necessary for the introduction of cis unsaturation into fatty acids. Catalyzes the dehydration of (3R)-3-hydroxydecanoyl-ACP to E-(2)-decenoyl-ACP and then its isomerization to Z-(3)-decenoyl-ACP. Can catalyze the dehydratase reaction for beta-hydroxyacyl-ACPs with saturated chain lengths up to 16:0, being most active on intermediate chain length. The chain is 3-hydroxydecanoyl-[acyl-carrier-protein] dehydratase from Rhodopseudomonas palustris (strain ATCC BAA-98 / CGA009).